The sequence spans 625 residues: Very-long-chain aldehyde decarbonylase CER1 (625 aa).

A run of 5 helical transmembrane segments spans residues 45-65 (LGYF…QVWI), 126-146 (GVLM…YWLH), 177-197 (PFAE…TTLL), 200-220 (TASI…NNMG), and 329-349 (LLWP…RLFV). A Fatty acid hydroxylase domain is found at 138-272 (VEFLYYWLHK…MPLYDYIYGT (135 aa)).

It belongs to the sterol desaturase family. As to quaternary structure, homodimer. Interacts with CER3, CYTB5-B, CYTB5-C, CYTB5-D and CYTB5-E. In terms of tissue distribution, expressed in seedlings, stems, leaves, flowers, fruits and siliques. Not detected in roots, pollen and seeds. Expressed in trichomes, cotyledons, shoot apical meristem and leaf primordia. Preferentially associated with young leaves rather than mature leaves. Expressed in the epidermis of the stem and caulines leaves, in the carpels and the sepals.

Its subcellular location is the endoplasmic reticulum membrane. It carries out the reaction a long-chain fatty aldehyde + 2 NADPH + O2 + H(+) = a long-chain alkane + formate + 2 NADP(+) + H2O. Functionally, aldehyde decarbonylase involved in the conversion of aldehydes to alkanes. Core component of a very-long-chain alkane synthesis complex. Involved in epicuticular wax biosynthesis and pollen fertility. The sequence is that of Very-long-chain aldehyde decarbonylase CER1 (CER1) from Arabidopsis thaliana (Mouse-ear cress).